The sequence spans 388 residues: Probable pectin lyase F-1 (388 aa).

A signal peptide spans 1-19 (MKTATFSTLLALSASAVNA). Residues Cys80 and Cys103 are joined by a disulfide bond. Residue Asn126 is glycosylated (N-linked (GlcNAc...) asparagine). Arg253 is a catalytic residue. Cys328 and Cys336 are joined by a disulfide.

Belongs to the polysaccharide lyase 1 family.

It is found in the secreted. It catalyses the reaction Eliminative cleavage of (1-&gt;4)-alpha-D-galacturonan methyl ester to give oligosaccharides with 4-deoxy-6-O-methyl-alpha-D-galact-4-enuronosyl groups at their non-reducing ends.. Functionally, pectinolytic enzymes consist of four classes of enzymes: pectin lyase, polygalacturonase, pectin methylesterase and rhamnogalacturonase. Among pectinolytic enzymes, pectin lyase is the most important in depolymerization of pectin, since it cleaves internal glycosidic bonds of highly methylated pectins. The polypeptide is Probable pectin lyase F-1 (pelF-1) (Aspergillus terreus (strain NIH 2624 / FGSC A1156)).